The chain runs to 493 residues: MKKASSQPRAIYYVVALQIWEYFSFYGMRALLILYLTNQLKYDDTHAYALFSAYCSLVYVTPILGGYLADKVLGNRMAVMLGAFLMAVGHLVLGASEIAPTFLYLSLAIIVCGYGLFKSNISCLLGELYQTEDPRRDGGFSLLYAAGNVGSIVAPIACGYVQEEYSWAMGFALAAIGMVAGLIIFLCGNRHFTHTKGVNKAALCARSFILPNWGWLLVLLTIAPLAIAVLFWQEWAVYALIVATAIGLAVLGKIYRQAENQKQRKELGLIVTLTFFSMLFWAFAQQGGSSISLYIDRFVNRHIFGYSVPTAMFQSVNAFAVMLCGVVLAWLIKESIGGNRSVRIWGKFALGLGLMSAGFSILTLSARWSAAYGHSSMPLMIAGLAVMGFAELFIDPVAMSQITRIEIPGVTGVLTGIYMLLSGAIANYLAGVIADRTSQSAFDASGAINYSINAYIDVFSEITWGALACVGLVLLIWLYQSLKFRNRPLAVGS.

13 helical membrane passes run 14 to 34 (VVAL…LLIL), 49 to 69 (ALFS…GYLA), 91 to 111 (LVLG…AIIV), 138 to 158 (GGFS…PIAC), 167 to 187 (WAMG…IFLC), 212 to 232 (NWGW…VLFW), 235 to 255 (WAVY…GKIY), 267 to 287 (LGLI…AQQG), 312 to 332 (MFQS…AWLI), 344 to 364 (IWGK…ILTL), 379 to 399 (LMIA…PVAM), 413 to 433 (VLTG…AGVI), and 458 to 478 (VFSE…LIWL).

It belongs to the major facilitator superfamily. Proton-dependent oligopeptide transporter (POT/PTR) (TC 2.A.17) family. DtpD subfamily.

The protein localises to the cell inner membrane. In terms of biological role, probable proton-dependent permease that transports dipeptides. The chain is Dipeptide permease D from Citrobacter rodentium (strain ICC168) (Citrobacter freundii biotype 4280).